The primary structure comprises 197 residues: Probable GTP-binding protein EngB (197 aa).

The region spanning 26 to 197 is the EngB-type G domain; sequence ELPEIALAGR…EAWDAILEKL (172 aa). GTP is bound by residues 34–41, 61–65, 79–82, 146–149, and 178–180; these read GRSNVGKS, GKTQL, DVPG, TKAD, and FSS. 2 residues coordinate Mg(2+): Ser-41 and Thr-63.

The protein belongs to the TRAFAC class TrmE-Era-EngA-EngB-Septin-like GTPase superfamily. EngB GTPase family. The cofactor is Mg(2+).

Functionally, necessary for normal cell division and for the maintenance of normal septation. This chain is Probable GTP-binding protein EngB, found in Streptococcus pneumoniae (strain CGSP14).